Consider the following 1330-residue polypeptide: ABC multidrug transporter mdr4 (1330 aa).

An N-linked (GlcNAc...) asparagine glycan is attached at Asn-3. Transmembrane regions (helical) follow at residues 90–110, 144–164, 218–238, 243–263, 324–344, and 370–390; these read VLLI…FPLL, VLYV…HSTC, KVGL…VAFI, IAGM…GGGH, HAAQ…LAFW, and IFVL…IHVF. The ABC transmembrane type-1 1 domain maps to 94–392; it reads IGGLLFAICA…VAPFIHVFAS (299 aa). The region spanning 428-666 is the ABC transporter 1 domain; that stretch reads IRFRDVHFKY…GGVYAEMVRL (239 aa). Position 463–470 (463–470) interacts with ATP; that stretch reads GPSGGGKS. Residue Asn-707 is glycosylated (N-linked (GlcNAc...) asparagine). The interval 717-736 is disordered; the sequence is VADTPSDSRDGSEEEARKKR. Basic and acidic residues predominate over residues 722–733; the sequence is SDSRDGSEEEAR. Transmembrane regions (helical) follow at residues 761–781, 806–826, 871–893, 903–923, 989–1009, and 1023–1043; these read LLGL…AIVF, LLFF…GCAF, ASAL…VNLI, AWKI…SGMM, AWLA…YWWG, and FFIV…MFAL. An ABC transmembrane type-1 2 domain is found at 761 to 1049; it reads LLGLAMSVII…MFALAPDISK (289 aa). The ABC transporter 2 domain maps to 1086–1325; it reads AQLRDVHFTY…SETYRTSVIH (240 aa). 1121–1128 contributes to the ATP binding site; the sequence is GPSGSGKS.

The protein belongs to the ABC transporter superfamily. ABCB family. Multidrug resistance exporter (TC 3.A.1.201) subfamily.

It is found in the cell membrane. The catalysed reaction is itraconazole(in) + ATP + H2O = itraconazole(out) + ADP + phosphate + H(+). It catalyses the reaction voriconazole(in) + ATP + H2O = voriconazole(out) + ADP + phosphate + H(+). Pleiotropic ABC efflux transporter that confers resistance to azoles such as itraconazole and voriconazole. The protein is ABC multidrug transporter mdr4 of Aspergillus fumigatus (strain ATCC MYA-4609 / CBS 101355 / FGSC A1100 / Af293) (Neosartorya fumigata).